A 331-amino-acid chain; its full sequence is Nucleotide sugar transporter SLC35B4 (331 aa).

The next 11 helical transmembrane spans lie at 4-24 (ALAVGLVFAGCCSNVIFLELL), 30-50 (GCGNIVTFAQFLFIAVEGFLF), 59-79 (PAIPIRYYAIMVTMFFTVSVV), 92-112 (LHMIFRSGSLIANMILGIIIL), 117-137 (SIFKYTSIALVSVGIFICTFM), 153-173 (GFQAFVWWLLGIGALTFALLM), 201-221 (ALPLPGFVFLASDIYDHAVLF), 229-249 (IPVIGVTLPIMWFYLLMNIIT), 251-267 (YVCIRGVFILTTECASL), 268-288 (TVTLVVTLRKFVSLIFSILYF), and 291-311 (PFTLWHWLGTLFVFIGTLMYT). The short motif at 326 to 331 (KDSKKN) is the Mediates endoplasmic reticulum retention element.

This sequence belongs to the nucleotide-sugar transporter family. SLC35B subfamily.

It is found in the endoplasmic reticulum membrane. The enzyme catalyses UDP-N-acetyl-alpha-D-glucosamine(in) + UDP-alpha-D-glucuronate(out) = UDP-N-acetyl-alpha-D-glucosamine(out) + UDP-alpha-D-glucuronate(in). The catalysed reaction is UDP-alpha-D-xylose(in) + UDP-alpha-D-glucuronate(out) = UDP-alpha-D-xylose(out) + UDP-alpha-D-glucuronate(in). Functionally, antiporter that transports nucleotide sugars across the endoplasmic reticulum (ER) membrane in exchange for another nucleotide sugar. May couple UDP-alpha-D-glucuronate (UDP-GlcA) or UDP-alpha-D-xylose (UDP-Xyl) efflux to UDP-alpha-D-glucuronate (UDP-GlcA) influx into the ER lumen, which in turn stimulates glucuronidation and excretion of endobiotics and xenobiotics. In terms of biological role, has UDP-GlcA:UDP-GlcNAc antiporter activity. The polypeptide is Nucleotide sugar transporter SLC35B4 (SLC35B4) (Homo sapiens (Human)).